Reading from the N-terminus, the 320-residue chain is Olfactory receptor 5C1 (320 aa).

Over Met1–Val29 the chain is Extracellular. The N-linked (GlcNAc...) asparagine glycan is linked to Asn5. A helical membrane pass occupies residues Ala30–Ala50. Topologically, residues Leu51 to Arg58 are cytoplasmic. Residues Leu59–Ser79 traverse the membrane as a helical segment. At Ala80–Leu103 the chain is on the extracellular side. Residues Cys101 and Cys193 are joined by a disulfide bond. The helical transmembrane segment at Gln104–Tyr124 threads the bilayer. At Asp125 to Arg143 the chain is on the cytoplasmic side. The chain crosses the membrane as a helical span at residues Leu144–Thr164. Topologically, residues Thr165 to Glu200 are extracellular. The chain crosses the membrane as a helical span at residues Leu201–Ser221. The Cytoplasmic segment spans residues Tyr222 to Ala241. The chain crosses the membrane as a helical span at residues Ala242–Met262. At Tyr263 to Asp275 the chain is on the extracellular side. Residues Lys276–Leu296 form a helical membrane-spanning segment. Residues Arg297–Gln320 are Cytoplasmic-facing.

The protein belongs to the G-protein coupled receptor 1 family.

It localises to the cell membrane. In terms of biological role, odorant receptor. The chain is Olfactory receptor 5C1 (OR5C1) from Homo sapiens (Human).